Consider the following 251-residue polypeptide: 1-(5-phosphoribosyl)-5-[(5-phosphoribosylamino)methylideneamino] imidazole-4-carboxamide isomerase (251 aa).

D8 serves as the catalytic Proton acceptor. Catalysis depends on D131, which acts as the Proton donor.

The protein belongs to the HisA/HisF family.

The protein resides in the cytoplasm. It carries out the reaction 1-(5-phospho-beta-D-ribosyl)-5-[(5-phospho-beta-D-ribosylamino)methylideneamino]imidazole-4-carboxamide = 5-[(5-phospho-1-deoxy-D-ribulos-1-ylimino)methylamino]-1-(5-phospho-beta-D-ribosyl)imidazole-4-carboxamide. The protein operates within amino-acid biosynthesis; L-histidine biosynthesis; L-histidine from 5-phospho-alpha-D-ribose 1-diphosphate: step 4/9. The polypeptide is 1-(5-phosphoribosyl)-5-[(5-phosphoribosylamino)methylideneamino] imidazole-4-carboxamide isomerase (Burkholderia vietnamiensis (strain G4 / LMG 22486) (Burkholderia cepacia (strain R1808))).